The primary structure comprises 148 residues: Large ribosomal subunit protein uL15 (148 aa).

A disordered region spans residues 1–47; the sequence is MTKLEDLRPTPGSVKPRKRVGRGIGSGHGKTSGRGHKGQKSRGSGKV. The segment covering 31-45 has biased composition (basic residues); it reads TSGRGHKGQKSRGSG.

This sequence belongs to the universal ribosomal protein uL15 family. As to quaternary structure, part of the 50S ribosomal subunit.

In terms of biological role, binds to the 23S rRNA. The polypeptide is Large ribosomal subunit protein uL15 (Pseudothermotoga lettingae (strain ATCC BAA-301 / DSM 14385 / NBRC 107922 / TMO) (Thermotoga lettingae)).